A 184-amino-acid chain; its full sequence is Uroplakin-2 (184 aa).

A signal peptide spans 1–25 (MASPLPVRTLPLILILLAVLAPGAS). Positions 26-84 (DFNISSLSGPLSPALTESLLVALPPCHLTGGNATLMVRRANDSKVVKSSFMVPPCRGRR) are excised as a propeptide. N-linked (GlcNAc...) asparagine glycans are attached at residues asparagine 28, asparagine 57, and asparagine 66. At 85–155 (ELVSVVDSGS…IGLGMARTGG (71 aa)) the chain is on the lumenal side. The chain crosses the membrane as a helical span at residues 156-180 (MVVITVLLSVAMFLLVVGFITALAL). The Cytoplasmic portion of the chain corresponds to 181–184 (GARK).

Belongs to the uroplakin-2 family. In terms of assembly, interacts with uroplakin-1a (UPK1A). Expressed only in the urothelium. Localizes to urothelial superficial cells.

The protein resides in the cell membrane. Component of the asymmetric unit membrane (AUM); a highly specialized biomembrane elaborated by terminally differentiated urothelial cells. May play an important role in regulating the assembly of the AUM. The chain is Uroplakin-2 (UPK2) from Sus scrofa (Pig).